A 405-amino-acid polypeptide reads, in one-letter code: G1/S-specific cyclin-D (405 aa).

Residues 76–200 (FYNCMEYEEA…LIVTTLQWET (125 aa)) form the Cyclin N-terminal domain. The disordered stretch occupies residues 301-405 (YTSEDAEKTE…STPPKIFKTL (105 aa)). Residues 311 to 321 (PTPSAPASTQE) show a composition bias toward polar residues. Positions 326–335 (QELKELKEEP) are enriched in basic and acidic residues. Residues 358 to 380 (SEQTPSTPLNDSGFSSDVSSPAS) are compositionally biased toward polar residues.

It belongs to the cyclin family. Cyclin D subfamily. In terms of assembly, interacts with cdk-4; the interaction is likely involved in regulating cdk-4 activity.

Functionally, in association with cdk-4, regulates the progression through the G1 phase of the cell cycle during postembryonic development. Regulates proliferation of the coelomocyte lineage and intestinal cells during late embryogenesis. In complex with cdk-4, involved in sex determination during gonadogenesis by regulating the asymmetric division of the somatic gonadal precursor cell (SGP). In Caenorhabditis elegans, this protein is G1/S-specific cyclin-D.